Consider the following 470-residue polypeptide: Nuclear receptor ROR-beta (470 aa).

The segment at residues 18–93 (VIPCKICGDK…LGMSRDAVKF (76 aa)) is a DNA-binding region (nuclear receptor). 2 consecutive NR C4-type zinc fingers follow at residues 21–41 (CKIC…CEGC) and 57–81 (CPRQ…LQKC). Over residues 104 to 117 (LYAEVQKHQQRLQE) the composition is skewed to basic and acidic residues. The disordered stretch occupies residues 104-127 (LYAEVQKHQQRLQEQRQQQSGEAE). The 239-residue stretch at 222–460 (EIDRIAQNII…TLFPPLYKEL (239 aa)) folds into the NR LBD domain. An AF-2 motif is present at residues 456 to 461 (LYKELF).

This sequence belongs to the nuclear hormone receptor family. NR1 subfamily. As to quaternary structure, monomer. Interacts with CRX. As to expression, isoform 2 expressed with circadian rhythm in eye and pineal gland. Isoform 1 expressed in retina cortex, thalamus, and hypothalamus.

The protein localises to the nucleus. The protein resides in the nucleoplasm. Nuclear receptor that binds DNA as a monomer to ROR response elements (RORE) containing a single core motif half-site 5'-AGGTCA-3' preceded by a short A-T-rich sequence. Considered to have intrinsic transcriptional activity, have some natural ligands such as all-trans retinoic acid (ATRA) and other retinoids which act as inverse agonists repressing the transcriptional activity. Required for normal postnatal development of rod and cone photoreceptor cells. Modulates rod photoreceptors differentiation at least by inducing the transcription factor NRL-mediated pathway. In cone photoreceptor cells, regulates transcription of OPN1SW. Involved in the regulation of the period length and stability of the circadian rhythm. May control cytoarchitectural patterning of neocortical neurons during development. May act in a dose-dependent manner to regulate barrel formation upon innervation of layer IV neurons by thalamocortical axons. May play a role in the suppression of osteoblastic differentiation through the inhibition of RUNX2 transcriptional activity. In terms of biological role, critical for hindlimb motor control and for the differentiation of amacrine and horizontal cells in the retina. Regulates the expression of PTF1A synergistically with FOXN4. The polypeptide is Nuclear receptor ROR-beta (Rorb) (Rattus norvegicus (Rat)).